Reading from the N-terminus, the 453-residue chain is Probable glycine dehydrogenase (decarboxylating) subunit 1 (453 aa).

This sequence belongs to the GcvP family. N-terminal subunit subfamily. The glycine cleavage system is composed of four proteins: P, T, L and H. In this organism, the P 'protein' is a heterodimer of two subunits.

The enzyme catalyses N(6)-[(R)-lipoyl]-L-lysyl-[glycine-cleavage complex H protein] + glycine + H(+) = N(6)-[(R)-S(8)-aminomethyldihydrolipoyl]-L-lysyl-[glycine-cleavage complex H protein] + CO2. In terms of biological role, the glycine cleavage system catalyzes the degradation of glycine. The P protein binds the alpha-amino group of glycine through its pyridoxal phosphate cofactor; CO(2) is released and the remaining methylamine moiety is then transferred to the lipoamide cofactor of the H protein. The sequence is that of Probable glycine dehydrogenase (decarboxylating) subunit 1 from Dictyoglomus thermophilum (strain ATCC 35947 / DSM 3960 / H-6-12).